Consider the following 429-residue polypeptide: 3-phosphoshikimate 1-carboxyvinyltransferase (429 aa).

Residues K23, S24, and R28 each coordinate 3-phosphoshikimate. Position 23 (K23) interacts with phosphoenolpyruvate. Residues G95 and R123 each contribute to the phosphoenolpyruvate site. Positions 168, 170, 316, and 343 each coordinate 3-phosphoshikimate. Position 170 (Q170) interacts with phosphoenolpyruvate. The active-site Proton acceptor is D316. Phosphoenolpyruvate-binding residues include R347 and R389.

It belongs to the EPSP synthase family. In terms of assembly, monomer.

The protein localises to the cytoplasm. It catalyses the reaction 3-phosphoshikimate + phosphoenolpyruvate = 5-O-(1-carboxyvinyl)-3-phosphoshikimate + phosphate. It participates in metabolic intermediate biosynthesis; chorismate biosynthesis; chorismate from D-erythrose 4-phosphate and phosphoenolpyruvate: step 6/7. Functionally, catalyzes the transfer of the enolpyruvyl moiety of phosphoenolpyruvate (PEP) to the 5-hydroxyl of shikimate-3-phosphate (S3P) to produce enolpyruvyl shikimate-3-phosphate and inorganic phosphate. The chain is 3-phosphoshikimate 1-carboxyvinyltransferase from Oceanobacillus iheyensis (strain DSM 14371 / CIP 107618 / JCM 11309 / KCTC 3954 / HTE831).